The primary structure comprises 399 residues: Phosphoglycerate kinase (399 aa).

Substrate-binding positions include 22 to 24 (DLN), R37, 60 to 63 (HFGR), R119, and R152. Residues K202, E324, and 354-357 (GGDT) each bind ATP.

The protein belongs to the phosphoglycerate kinase family. Monomer.

The protein resides in the cytoplasm. It catalyses the reaction (2R)-3-phosphoglycerate + ATP = (2R)-3-phospho-glyceroyl phosphate + ADP. Its pathway is carbohydrate degradation; glycolysis; pyruvate from D-glyceraldehyde 3-phosphate: step 2/5. This Sinorhizobium fredii (strain NBRC 101917 / NGR234) protein is Phosphoglycerate kinase.